We begin with the raw amino-acid sequence, 66 residues long: Heat-stable enterotoxin (66 aa).

Positions 1-19 (MKKIVFVLVLMLSSFGTFG) are cleaved as a signal peptide. A propeptide spanning residues 20 to 50 (QETASRQFGDAFSTPIAAEVNKKACDTELPP) is cleaved from the precursor. Disulfide bonds link Cys-54–Cys-59, Cys-55–Cys-63, and Cys-58–Cys-66.

This sequence belongs to the heat-stable enterotoxin family.

Its subcellular location is the secreted. Functionally, toxin which activates the particulate form of guanylate cyclase and increases cyclic GMP levels within the host intestinal epithelial cells. In Yersinia kristensenii, this protein is Heat-stable enterotoxin (yst).